Reading from the N-terminus, the 96-residue chain is UPF0235 protein YPK_0828 (96 aa).

It belongs to the UPF0235 family.

The chain is UPF0235 protein YPK_0828 from Yersinia pseudotuberculosis serotype O:3 (strain YPIII).